The chain runs to 465 residues: tRNA-2-methylthio-N(6)-dimethylallyladenosine synthase (465 aa).

The MTTase N-terminal domain maps to 26-141 (MRAHIITYGC…LPEALKANER (116 aa)). Positions 35, 71, 104, 173, 177, and 180 each coordinate [4Fe-4S] cluster. Residues 159–388 (PKGALSAHVT…IEKQKEWSYR (230 aa)) enclose the Radical SAM core domain. The TRAM domain maps to 391–453 (LEWVGKTVEV…PHLLFGEVVG (63 aa)).

This sequence belongs to the methylthiotransferase family. MiaB subfamily. As to quaternary structure, monomer. The cofactor is [4Fe-4S] cluster.

The protein resides in the cytoplasm. The enzyme catalyses N(6)-dimethylallyladenosine(37) in tRNA + (sulfur carrier)-SH + AH2 + 2 S-adenosyl-L-methionine = 2-methylsulfanyl-N(6)-dimethylallyladenosine(37) in tRNA + (sulfur carrier)-H + 5'-deoxyadenosine + L-methionine + A + S-adenosyl-L-homocysteine + 2 H(+). In terms of biological role, catalyzes the methylthiolation of N6-(dimethylallyl)adenosine (i(6)A), leading to the formation of 2-methylthio-N6-(dimethylallyl)adenosine (ms(2)i(6)A) at position 37 in tRNAs that read codons beginning with uridine. The polypeptide is tRNA-2-methylthio-N(6)-dimethylallyladenosine synthase (Thermus thermophilus (strain ATCC 27634 / DSM 579 / HB8)).